We begin with the raw amino-acid sequence, 105 residues long: Small ribosomal subunit protein uS10 (105 aa).

It belongs to the universal ribosomal protein uS10 family. In terms of assembly, part of the 30S ribosomal subunit.

In terms of biological role, involved in the binding of tRNA to the ribosomes. In Picosynechococcus sp. (strain ATCC 27264 / PCC 7002 / PR-6) (Agmenellum quadruplicatum), this protein is Small ribosomal subunit protein uS10.